The chain runs to 361 residues: Mitogen-activated protein kinase 1 (361 aa).

The Protein kinase domain occupies 28–316 (YINLAYIGEG…VEAALAHPYL (289 aa)). ATP is bound by residues 34–42 (IGEGAYGMV) and Lys57. The Proton acceptor role is filled by Asp152. Thr188 is subject to Phosphothreonine. The TXY signature appears at 188–190 (TEY). A Phosphotyrosine modification is found at Tyr190.

This sequence belongs to the protein kinase superfamily. CMGC Ser/Thr protein kinase family. MAP kinase subfamily. Interacts with CDK2AP2. It depends on Mg(2+) as a cofactor. Post-translationally, dually phosphorylated on Thr-188 and Tyr-190, which activates the enzyme. As to expression, expressed in the central nervous system, kidney, liver, intestine and the hematopoietic system. Also found in heart, muscle, pancreas and lung.

The protein resides in the cytoplasm. The protein localises to the cytoskeleton. Its subcellular location is the microtubule organizing center. It localises to the centrosome. It is found in the spindle. It catalyses the reaction L-seryl-[protein] + ATP = O-phospho-L-seryl-[protein] + ADP + H(+). The catalysed reaction is L-threonyl-[protein] + ATP = O-phospho-L-threonyl-[protein] + ADP + H(+). Activated by tyrosine phosphorylation during the M phase of the meiotic cell cycle. Dephosphorylated and inactivated by DUSP1. Its function is as follows. Serine/threonine kinase which acts as an essential component of the MAP kinase signal transduction pathway. Plays an important role in the MAPK/ERK cascade. Depending on the cellular context, this cascade mediates diverse biological functions such as cell growth, adhesion, survival and differentiation through the regulation of transcription, translation, cytoskeletal rearrangements. The MAPK/ERK cascade also plays a role in initiation and regulation of meiosis, mitosis, and postmitotic functions in differentiated cells by phosphorylating a number of transcription factors. Many of the substrates are localized in the nucleus, and seem to participate in the regulation of transcription upon stimulation. However, other substrates are found in the cytosol as well as in other cellular organelles, and those are responsible for processes such as translation, mitosis and apoptosis. Moreover, the MAPK/ERK cascade is also involved in the regulation of the endosomal dynamics, including lysosome processing and endosome cycling through the perinuclear recycling compartment (PNRC); as well as in the fragmentation of the Golgi apparatus during mitosis. Phosphorylates microtubule-associated protein 2 (MAP2), myelin basic protein (MBP) and Elk-1. Phosphorylates dual specificity protein phosphatase 1 (DUSP1) during meiosis, increasing its stability. Activated by M phase promoting factor (MPF). Plays a role in the spindle assembly checkpoint. The protein is Mitogen-activated protein kinase 1 (mapk1) of Xenopus laevis (African clawed frog).